We begin with the raw amino-acid sequence, 101 residues long: NADH-quinone oxidoreductase subunit K (101 aa).

Helical transmembrane passes span 4-24 (LAHFLVLGAILFAISIVGIFL), 30-50 (IVLLMALELLLLAVNMNFVAF), and 61-81 (VFVFFILTVAAAESAIGLAIL).

The protein belongs to the complex I subunit 4L family. As to quaternary structure, NDH-1 is composed of 14 different subunits. Subunits NuoA, H, J, K, L, M, N constitute the membrane sector of the complex.

The protein resides in the cell inner membrane. The enzyme catalyses a quinone + NADH + 5 H(+)(in) = a quinol + NAD(+) + 4 H(+)(out). In terms of biological role, NDH-1 shuttles electrons from NADH, via FMN and iron-sulfur (Fe-S) centers, to quinones in the respiratory chain. The immediate electron acceptor for the enzyme in this species is believed to be ubiquinone. Couples the redox reaction to proton translocation (for every two electrons transferred, four hydrogen ions are translocated across the cytoplasmic membrane), and thus conserves the redox energy in a proton gradient. This is NADH-quinone oxidoreductase subunit K from Cupriavidus metallidurans (strain ATCC 43123 / DSM 2839 / NBRC 102507 / CH34) (Ralstonia metallidurans).